A 198-amino-acid polypeptide reads, in one-letter code: Small ribosomal subunit protein uS4 (198 aa).

The S4 RNA-binding domain maps to 88–153 (LRLDNVMFRM…AQRYKDILEV (66 aa)).

Belongs to the universal ribosomal protein uS4 family. As to quaternary structure, part of the 30S ribosomal subunit. Contacts protein S5. The interaction surface between S4 and S5 is involved in control of translational fidelity.

In terms of biological role, one of the primary rRNA binding proteins, it binds directly to 16S rRNA where it nucleates assembly of the body of the 30S subunit. Its function is as follows. With S5 and S12 plays an important role in translational accuracy. The chain is Small ribosomal subunit protein uS4 from Lachnoclostridium phytofermentans (strain ATCC 700394 / DSM 18823 / ISDg) (Clostridium phytofermentans).